The chain runs to 408 residues: Na(+)/H(+) antiporter NhaA (408 aa).

The next 12 helical transmembrane spans lie at Leu42–Phe62, Val69–Leu89, Ala110–Val130, Gly140–Gly160, Ile169–Phe189, Ala192–Leu212, Phe215–Leu235, Gly238–Thr258, Val277–Leu297, Leu312–Leu332, Leu346–Leu366, and Ile380–Thr400.

This sequence belongs to the NhaA Na(+)/H(+) (TC 2.A.33) antiporter family.

It is found in the cell inner membrane. The enzyme catalyses Na(+)(in) + 2 H(+)(out) = Na(+)(out) + 2 H(+)(in). Its function is as follows. Na(+)/H(+) antiporter that extrudes sodium in exchange for external protons. This is Na(+)/H(+) antiporter NhaA from Nitrobacter hamburgensis (strain DSM 10229 / NCIMB 13809 / X14).